A 341-amino-acid chain; its full sequence is CRISPR-associated endonuclease Cas1 (341 aa).

Residues E173, H242, and E257 each contribute to the Mn(2+) site.

This sequence belongs to the CRISPR-associated endonuclease Cas1 family. As to quaternary structure, homodimer, forms a heterotetramer with a Cas2 homodimer. Mg(2+) serves as cofactor. Mn(2+) is required as a cofactor.

Functionally, CRISPR (clustered regularly interspaced short palindromic repeat), is an adaptive immune system that provides protection against mobile genetic elements (viruses, transposable elements and conjugative plasmids). CRISPR clusters contain spacers, sequences complementary to antecedent mobile elements, and target invading nucleic acids. CRISPR clusters are transcribed and processed into CRISPR RNA (crRNA). Acts as a dsDNA endonuclease. Involved in the integration of spacer DNA into the CRISPR cassette. This chain is CRISPR-associated endonuclease Cas1, found in Korarchaeum cryptofilum (strain OPF8).